The sequence spans 97 residues: Small ribosomal subunit protein bS20 (97 aa).

The protein belongs to the bacterial ribosomal protein bS20 family.

In terms of biological role, binds directly to 16S ribosomal RNA. The polypeptide is Small ribosomal subunit protein bS20 (Gloeothece citriformis (strain PCC 7424) (Cyanothece sp. (strain PCC 7424))).